A 328-amino-acid polypeptide reads, in one-letter code: Malate dehydrogenase (328 aa).

Residue Gly-16–Ser-22 coordinates NAD(+). Residues Arg-97 and Arg-103 each contribute to the substrate site. NAD(+) is bound by residues Asn-110, Gln-117, and Val-134 to Asn-136. 2 residues coordinate substrate: Asn-136 and Arg-167. His-192 (proton acceptor) is an active-site residue.

This sequence belongs to the LDH/MDH superfamily. MDH type 2 family. In terms of assembly, homotetramer.

It catalyses the reaction (S)-malate + NAD(+) = oxaloacetate + NADH + H(+). Citrate activates the enzyme in the oxidation of malate to oxaloacetate and inhibits it in the reverse reaction. Catalyzes the reversible oxidation of malate to oxaloacetate. Exhibits higher catalytic efficiency for oxaloacetate reduction than for malate oxidation in vitro. Almost equally active both for NADH and NADPH on the bases of the kcat values at pH 6.5, but catalytic efficiency for oxaloacetate reduction is 50-fold higher with NADH. The protein is Malate dehydrogenase of Corynebacterium glutamicum (strain ATCC 13032 / DSM 20300 / JCM 1318 / BCRC 11384 / CCUG 27702 / LMG 3730 / NBRC 12168 / NCIMB 10025 / NRRL B-2784 / 534).